The following is a 354-amino-acid chain: Serum paraoxonase/arylesterase 2 (354 aa).

A disulfide bond links cysteine 42 and cysteine 352. Glutamate 53 and aspartate 54 together coordinate Ca(2+). Histidine 114 functions as the Proton acceptor in the catalytic mechanism. 4 residues coordinate Ca(2+): isoleucine 116, asparagine 167, aspartate 168, and asparagine 223. The N-linked (GlcNAc...) asparagine glycan is linked to asparagine 254. Residues aspartate 268 and asparagine 269 each contribute to the Ca(2+) site. N-linked (GlcNAc...) asparagine glycans are attached at residues asparagine 269 and asparagine 323.

Belongs to the paraoxonase family. As to quaternary structure, homotrimer. Requires Ca(2+) as cofactor. Glycosylated. Post-translationally, the signal sequence is not cleaved.

Its subcellular location is the membrane. The enzyme catalyses a phenyl acetate + H2O = a phenol + acetate + H(+). It catalyses the reaction an N-acyl-L-homoserine lactone + H2O = an N-acyl-L-homoserine + H(+). Capable of hydrolyzing lactones and a number of aromatic carboxylic acid esters. In Rattus norvegicus (Rat), this protein is Serum paraoxonase/arylesterase 2 (Pon2).